The chain runs to 125 residues: Large ribosomal subunit protein bL12 (125 aa).

This sequence belongs to the bacterial ribosomal protein bL12 family. In terms of assembly, homodimer. Part of the ribosomal stalk of the 50S ribosomal subunit. Forms a multimeric L10(L12)X complex, where L10 forms an elongated spine to which 2 to 4 L12 dimers bind in a sequential fashion. Binds GTP-bound translation factors.

Its function is as follows. Forms part of the ribosomal stalk which helps the ribosome interact with GTP-bound translation factors. Is thus essential for accurate translation. In Polaromonas sp. (strain JS666 / ATCC BAA-500), this protein is Large ribosomal subunit protein bL12.